Consider the following 454-residue polypeptide: UPF0210 protein Blon_2054/BLIJ_2131 (454 aa).

This sequence belongs to the UPF0210 family. In terms of assembly, homodimer.

This chain is UPF0210 protein Blon_2054/BLIJ_2131, found in Bifidobacterium longum subsp. infantis (strain ATCC 15697 / DSM 20088 / JCM 1222 / NCTC 11817 / S12).